Reading from the N-terminus, the 239-residue chain is Increased recombination centers protein 22-2 (239 aa).

Residues 1-19 (MKLSTIFTAFAATIATVAG) form the signal peptide. At 20–161 (YETTGSKQTV…AAVSFFDPRL (142 aa)) the chain is on the lumenal side. The helical transmembrane segment at 162–182 (IFLELVLLITFAGLIYVGYEI) threads the bilayer. Residues 183–239 (WGKQYFKGVAPVKAKKVSAAKASSPVATGPSTTSATGYDTNWIPESHLKQKKTKKVN) are Cytoplasmic-facing. The tract at residues 202–222 (AKASSPVATGPSTTSATGYDT) is disordered. Residues 211 to 221 (GPSTTSATGYD) show a composition bias toward polar residues.

The protein belongs to the IRC22 family.

It is found in the endoplasmic reticulum membrane. Its function is as follows. Is probably involved in a pathway contributing to genomic integrity. The protein is Increased recombination centers protein 22-2 (IRC22-2) of Candida albicans (strain SC5314 / ATCC MYA-2876) (Yeast).